The primary structure comprises 199 residues: Elongation factor Ts (199 aa).

Positions 82–85 are involved in Mg(2+) ion dislocation from EF-Tu; it reads TDFV.

This sequence belongs to the EF-Ts family.

It is found in the cytoplasm. Associates with the EF-Tu.GDP complex and induces the exchange of GDP to GTP. It remains bound to the aminoacyl-tRNA.EF-Tu.GTP complex up to the GTP hydrolysis stage on the ribosome. This Leptospira borgpetersenii serovar Hardjo-bovis (strain JB197) protein is Elongation factor Ts.